Here is an 878-residue protein sequence, read N- to C-terminus: Alanine--tRNA ligase (878 aa).

Zn(2+) is bound by residues His-564, His-568, Cys-666, and His-670.

Belongs to the class-II aminoacyl-tRNA synthetase family. As to quaternary structure, homotetramer. Zn(2+) is required as a cofactor.

Its subcellular location is the cytoplasm. It carries out the reaction tRNA(Ala) + L-alanine + ATP = L-alanyl-tRNA(Ala) + AMP + diphosphate. Catalyzes the attachment of alanine to tRNA(Ala) in a two-step reaction: alanine is first activated by ATP to form Ala-AMP and then transferred to the acceptor end of tRNA(Ala). Also edits incorrectly charged Ser-tRNA(Ala) and Gly-tRNA(Ala) via its editing domain. This is Alanine--tRNA ligase from Buchnera aphidicola subsp. Acyrthosiphon pisum (strain APS) (Acyrthosiphon pisum symbiotic bacterium).